A 1033-amino-acid polypeptide reads, in one-letter code: Collagen alpha-2(I) chain (1033 aa).

Residues 1–1033 (SGGFDFSFLP…FGYEGDFYRA (1033 aa)) are disordered. 3 stretches are compositionally biased toward low complexity: residues 25–71 (LGPG…ARGP), 154–175 (SRGS…SAGP), and 221–242 (PGAN…AGAP). Positions 276-285 (GESGGKGEPG) are enriched in gly residues. The segment covering 286–296 (SAGPQGPPGSS) has biased composition (low complexity). The span at 318–327 (GLRGGPGSRG) shows a compositional bias: gly residues. Low complexity-rich tracts occupy residues 340 to 356 (PAGA…RGPS) and 391 to 410 (LPGI…RGEA). Positions 459–468 (GVQGGKGEQG) are enriched in gly residues. Composition is skewed to low complexity over residues 519 to 528 (PSGAIGSRGP) and 540 to 550 (EPGVVGAPGTA). Residues 551–560 (GPAGSGGLPG) are compositionally biased toward gly residues. 2 stretches are compositionally biased toward low complexity: residues 583–627 (VGTT…PRGS) and 634–654 (VGPA…QPGA). Residues 655–664 (KGERGTKGPK) are compositionally biased toward basic and acidic residues. A compositionally biased stretch (low complexity) spans 672–682 (PTGPVGSAGPA). The segment covering 692-701 (GSRGDGGPPG) has biased composition (gly residues). The span at 703–712 (TGFPGAAGRT) shows a compositional bias: low complexity. Residues 749-758 (GETGAGGPPG) show a composition bias toward gly residues. Composition is skewed to low complexity over residues 766–793 (SGEP…LGLP) and 801–811 (LPGVAGAVGEP). Over residues 812–834 (GPLGIGPPGARGPSGGVGPGVNG) the composition is skewed to gly residues. Low complexity predominate over residues 873-909 (AAGAPGPHGAVGPAGKHGNRGEPGPVGSAGPVGALGP). Over residues 919-930 (RGDKGEAGDKGP) the composition is skewed to basic and acidic residues. The span at 1003–1015 (SGPPGPPGPPGPP) shows a compositional bias: pro residues.

This sequence belongs to the fibrillar collagen family. Trimers of one alpha 2(I) and two alpha 1(I) chains. Interacts (via C-terminus) with TMEM131 (via PapD-L domain); the interaction is direct and is involved in assembly and TRAPPIII ER-to-Golgi transport complex-dependent secretion of collagen. Post-translationally, prolines at the third position of the tripeptide repeating unit (G-X-Y) are hydroxylated in some or all of the chains. As to expression, expressed in bone.

It localises to the secreted. The protein resides in the extracellular space. It is found in the extracellular matrix. Its function is as follows. Type I collagen is a member of group I collagen (fibrillar forming collagen). The sequence is that of Collagen alpha-2(I) chain from Mylodon darwinii (Giant ground sloth).